A 403-amino-acid polypeptide reads, in one-letter code: Argininosuccinate synthase (403 aa).

Residues 13–21 (AYSGGLDTS) and alanine 40 each bind ATP. L-citrulline contacts are provided by tyrosine 92 and serine 97. Glycine 122 is a binding site for ATP. Threonine 124, asparagine 128, and aspartate 129 together coordinate L-aspartate. Residue asparagine 128 coordinates L-citrulline. L-citrulline contacts are provided by arginine 132, serine 181, serine 190, glutamate 266, and tyrosine 278.

The protein belongs to the argininosuccinate synthase family. Type 1 subfamily. As to quaternary structure, homotetramer.

The protein resides in the cytoplasm. The enzyme catalyses L-citrulline + L-aspartate + ATP = 2-(N(omega)-L-arginino)succinate + AMP + diphosphate + H(+). It participates in amino-acid biosynthesis; L-arginine biosynthesis; L-arginine from L-ornithine and carbamoyl phosphate: step 2/3. This is Argininosuccinate synthase from Aliivibrio fischeri (strain ATCC 700601 / ES114) (Vibrio fischeri).